A 195-amino-acid polypeptide reads, in one-letter code: MRVAEVVRNTSETQIRVKLDLDGTGRQKLATGVPFLDHMLDQIARHGLVDLEVEAHGDTHIDDHHTVEDVGITLGQAVAKAIGDRKGIRRYGHSYVPLDEALSRVVIDFSGRPGLEFHVPFTRARIGTFDVDLSIEFFRGFVNHAGVTLHIDNLRGINAHHQLETVFKAFGRALRAAVELDERAAGQIPSTKGSL.

It belongs to the imidazoleglycerol-phosphate dehydratase family.

It localises to the cytoplasm. It catalyses the reaction D-erythro-1-(imidazol-4-yl)glycerol 3-phosphate = 3-(imidazol-4-yl)-2-oxopropyl phosphate + H2O. The protein operates within amino-acid biosynthesis; L-histidine biosynthesis; L-histidine from 5-phospho-alpha-D-ribose 1-diphosphate: step 6/9. The sequence is that of Imidazoleglycerol-phosphate dehydratase from Burkholderia cenocepacia (strain HI2424).